The chain runs to 244 residues: Phosphoadenosine 5'-phosphosulfate reductase (244 aa).

Residue C239 is the Nucleophile; cysteine thiosulfonate intermediate of the active site.

It belongs to the PAPS reductase family. CysH subfamily.

The protein localises to the cytoplasm. The enzyme catalyses [thioredoxin]-disulfide + sulfite + adenosine 3',5'-bisphosphate + 2 H(+) = [thioredoxin]-dithiol + 3'-phosphoadenylyl sulfate. Its pathway is sulfur metabolism; hydrogen sulfide biosynthesis; sulfite from sulfate: step 3/3. Functionally, catalyzes the formation of sulfite from phosphoadenosine 5'-phosphosulfate (PAPS) using thioredoxin as an electron donor. The protein is Phosphoadenosine 5'-phosphosulfate reductase of Cronobacter sakazakii (strain ATCC BAA-894) (Enterobacter sakazakii).